A 252-amino-acid chain; its full sequence is Phosphoglycolate phosphatase (252 aa).

The active-site Nucleophile is aspartate 13. Residues aspartate 13, aspartate 15, and aspartate 192 each coordinate Mg(2+).

The protein belongs to the HAD-like hydrolase superfamily. CbbY/CbbZ/Gph/YieH family. As to quaternary structure, monomer. Mg(2+) serves as cofactor. Chloride is required as a cofactor.

The catalysed reaction is 2-phosphoglycolate + H2O = glycolate + phosphate. Its pathway is organic acid metabolism; glycolate biosynthesis; glycolate from 2-phosphoglycolate: step 1/1. Its function is as follows. Specifically catalyzes the dephosphorylation of 2-phosphoglycolate. Is involved in the dissimilation of the intracellular 2-phosphoglycolate formed during the DNA repair of 3'-phosphoglycolate ends, a major class of DNA lesions induced by oxidative stress. The sequence is that of Phosphoglycolate phosphatase from Shigella boydii serotype 4 (strain Sb227).